Consider the following 660-residue polypeptide: Acetyl-coenzyme A synthetase (660 aa).

CoA-binding positions include 197–200 (RGGK) and Thr317. ATP contacts are provided by residues 397 to 399 (GEP), 421 to 426 (DTFWQT), Asp512, and Arg528. Ser536 is a binding site for CoA. ATP is bound at residue Arg539. Val550 and Val555 together coordinate Mg(2+). An N6-acetyllysine modification is found at Lys625.

It belongs to the ATP-dependent AMP-binding enzyme family. The cofactor is Mg(2+). In terms of processing, acetylated. Deacetylation by the SIR2-homolog deacetylase activates the enzyme.

The enzyme catalyses acetate + ATP + CoA = acetyl-CoA + AMP + diphosphate. Catalyzes the conversion of acetate into acetyl-CoA (AcCoA), an essential intermediate at the junction of anabolic and catabolic pathways. AcsA undergoes a two-step reaction. In the first half reaction, AcsA combines acetate with ATP to form acetyl-adenylate (AcAMP) intermediate. In the second half reaction, it can then transfer the acetyl group from AcAMP to the sulfhydryl group of CoA, forming the product AcCoA. In Ralstonia pickettii (strain 12J), this protein is Acetyl-coenzyme A synthetase.